The following is a 156-amino-acid chain: Transcriptional repressor NrdR (156 aa).

Residues 3–34 (CPKCSSTHSRVVDSRHADDANAIRRRRECENC) fold into a zinc finger. Positions 49 to 139 (LIVVKKDGTR…VYKEFKDVDQ (91 aa)) constitute an ATP-cone domain.

The protein belongs to the NrdR family. The cofactor is Zn(2+).

In terms of biological role, negatively regulates transcription of bacterial ribonucleotide reductase nrd genes and operons by binding to NrdR-boxes. This Staphylococcus haemolyticus (strain JCSC1435) protein is Transcriptional repressor NrdR.